We begin with the raw amino-acid sequence, 295 residues long: Pantothenate synthetase (295 aa).

H37 acts as the Proton donor in catalysis. Residue Q61 coordinates (R)-pantoate. Q61 contributes to the beta-alanine binding site. 154-157 (GRKD) is an ATP binding site. Q160 contributes to the (R)-pantoate binding site. ATP contacts are provided by residues V183 and 191 to 194 (QSSR).

This sequence belongs to the pantothenate synthetase family. As to quaternary structure, homodimer.

Its subcellular location is the cytoplasm. It catalyses the reaction (R)-pantoate + beta-alanine + ATP = (R)-pantothenate + AMP + diphosphate + H(+). It participates in cofactor biosynthesis; (R)-pantothenate biosynthesis; (R)-pantothenate from (R)-pantoate and beta-alanine: step 1/1. Catalyzes the condensation of pantoate with beta-alanine in an ATP-dependent reaction via a pantoyl-adenylate intermediate. The protein is Pantothenate synthetase of Salinibacter ruber (strain DSM 13855 / M31).